An 852-amino-acid chain; its full sequence is Potassium voltage-gated channel subfamily KQT member 2 (852 aa).

At 1-90 the chain is on the cytoplasmic side; sequence MVQKSRNGGV…LYNVLERPRG (90 aa). Serine 52 bears the Phosphoserine; by PKA mark. A helical membrane pass occupies residues 91–113; it reads WAFIYHAYVFLLVFSCLVLSVFS. Residues 114–123 lie on the Extracellular side of the membrane; the sequence is TIKEYEKSSE. A helical membrane pass occupies residues 124-145; the sequence is GALYILEIVTIVVFGVEYFVRI. The Cytoplasmic segment spans residues 146–163; it reads WAAGCCCRYRGWRGRLKF. A helical membrane pass occupies residues 164 to 183; the sequence is ARKPFCVIDIMVLIASIAVL. At 184–196 the chain is on the extracellular side; the sequence is AAGSQGNVFATSA. The helical; Voltage-sensor transmembrane segment at 197 to 215 threads the bilayer; it reads LRSLRFLQILRMIRMDRRG. Position 214 (arginine 214) interacts with a 1,2-diacyl-sn-glycero-3-phospho-(1D-myo-inositol-4,5-bisphosphate). Topologically, residues 216-227 are cytoplasmic; that stretch reads GTWKLLGSVVYA. A mediates interaction with SLC5A3 region spans residues 222–323; it reads GSVVYAHSKE…SGFALKVQEQ (102 aa). A helical transmembrane segment spans residues 228 to 253; sequence HSKELVTAWYIGFLCLILASFLVYLA. Position 230 (lysine 230) interacts with a 1,2-diacyl-sn-glycero-3-phospho-(1D-myo-inositol-4,5-bisphosphate). At 254-263 the chain is on the extracellular side; it reads EKGENDHFDT. The segment at residues 264 to 276 is an intramembrane region (pore-forming); it reads YADALWWGLITLT. Residues 277 to 282 carry the Selectivity filter motif; it reads TIGYGD. Over 277 to 287 the chain is Extracellular; sequence TIGYGDKYPQT. A helical transmembrane segment spans residues 288-314; that stretch reads WNGRLLAATFTLIGVSFFALPAGILGS. Residues 315–852 are Cytoplasmic-facing; it reads GFALKVQEQH…GDVAWAGPRK (538 aa). Residues 317–522 form a mediates interaction with calmodulin region; that stretch reads ALKVQEQHRQ…EDLTPGLKVS (206 aa). Lysine 327 provides a ligand contact to a 1,2-diacyl-sn-glycero-3-phospho-(1D-myo-inositol-4,5-bisphosphate). Residues 404–469 form a disordered region; sequence TFRKEPQPEP…SKVPKSWSFG (66 aa). The segment covering 440–457 has biased composition (polar residues); that stretch reads PQAQTVRRSPSADQSLDD. Phosphoserine is present on residues serine 448, serine 450, serine 454, serine 458, serine 460, and serine 489. Disordered regions lie at residues 579-601, 643-662, and 672-718; these read GPTI…EDPS, GAKE…SRDH, and IVRS…DHGS. Residues 583–592 are compositionally biased toward basic and acidic residues; that stretch reads TDKDRTKGPA. Serine 655 carries the phosphoserine modification. Serine 781 and serine 783 each carry phosphoserine. Residues 818–852 are disordered; it reads ESDTDSDLCTPCGPPPRSATGEGPFGDVAWAGPRK.

It belongs to the potassium channel family. KQT (TC 1.A.1.15) subfamily. Kv7.2/KCNQ2 sub-subfamily. Heterotetramer with KCNQ3; forms heterotetrameric M-channel responsible for the M-current. Homotetrameric; forms a functional homotetrameric channel resulting in the expression of a small M-current. Interacts with calmodulin; the interaction is calcium-independent, constitutive and participates in the proper assembly of a functional M-channel. May associate with KCNE2. Interacts with IQCJ-SCHIP1. Interacts (via the pore module) with SLC5A3/SMIT1; forms a coregulatory complex that alters ion selectivity, voltage dependence and gating kinetics of the channel. Interacts with AKAP5; the interaction may help KCNQ2 channel complex to retain calcium-bound calmodulin. KCNQ2/KCNQ3 heteromeric current can be increased by intracellular cyclic AMP, an effect that depends on phosphorylation of Ser-52 in the N-terminal region. In terms of processing, KCNQ2/KCNQ3 are ubiquitinated by NEDD4L. Ubiquitination leads to protein degradation. Degradation induced by NEDD4L is inhibited by USP36. Expressed in brain and sympathetic ganglia. In brain, expressed in cortex, hippocampus, and cerebellum. In sympathetic ganglia, expressed at lower levels in celiac ganglia and superior mesenteric ganglia than in superior cervical ganglia.

It localises to the cell membrane. The catalysed reaction is K(+)(in) = K(+)(out). It carries out the reaction Rb(+)(in) = Rb(+)(out). The enzyme catalyses Cs(+)(in) = Cs(+)(out). It catalyses the reaction Na(+)(in) = Na(+)(out). Its activity is regulated as follows. Phosphatidylinositol-4,5-bisphosphate (PIP2) potentiates the activation of KCNQ channels by enhancing the electro-mechanical coupling of the voltage-sensing domain (VSD) and the pore-forming domain (PD). In the closed state of the channel, PIP2 is anchored at the S2-S3 loop; upon channel activation, PIP2 interacts with the S4-S5 linker and is involved in channel gating. Calcium suppresses KCNQ2 and KCNQ2-KCNQ3 channel currents, with calcium-bound calmodulin inducing a change in channel configuration which leads to the reduction of channel affinity for PIP2 and subsequent current suppression. Functionally, pore-forming subunit of the voltage-gated potassium (Kv) M-channel which is responsible for the M-current, a key controller of neuronal excitability. M-channel is composed of pore-forming subunits KCNQ2 and KCNQ3 assembled as heterotetramers. The native M-current has a slowly activating and deactivating potassium conductance which plays a critical role in determining the subthreshold electrical excitability of neurons as well as the responsiveness to synaptic inputs. M-channel is selectively permeable in vitro to other cations besides potassium, in decreasing order of affinity K(+) &gt; Rb(+) &gt; Cs(+) &gt; Na(+). M-channel association with SLC5A3/SMIT1 alters channel ion selectivity, increasing Na(+) and Cs(+) permeation relative to K(+). Suppressed by activation of the muscarinic acetylcholine receptor CHRM1. This chain is Potassium voltage-gated channel subfamily KQT member 2, found in Rattus norvegicus (Rat).